A 145-amino-acid chain; its full sequence is MIIGIGSDICDIRRIETVLERHGERFLSRVFTTAERAKAERRNGRMRMGTYAKRFAAKEACAKALGTGFAGGVFMSDLGVVNLSSGQPTLRLTGGAAARLSAMTPSGMGAQVLLTMTDEYPYAYAQVVISAVPLPTSLIGGRGLP.

Positions 8 and 59 each coordinate Mg(2+).

The protein belongs to the P-Pant transferase superfamily. AcpS family. The cofactor is Mg(2+).

It localises to the cytoplasm. The catalysed reaction is apo-[ACP] + CoA = holo-[ACP] + adenosine 3',5'-bisphosphate + H(+). Functionally, transfers the 4'-phosphopantetheine moiety from coenzyme A to a Ser of acyl-carrier-protein. The sequence is that of Holo-[acyl-carrier-protein] synthase from Granulibacter bethesdensis (strain ATCC BAA-1260 / CGDNIH1).